Here is a 339-residue protein sequence, read N- to C-terminus: Holliday junction branch migration complex subunit RuvB (339 aa).

The tract at residues 1–181 (MEERLVSGYE…FGMVHRLEFY (181 aa)) is large ATPase domain (RuvB-L). ATP is bound by residues Leu-20, Arg-21, Gly-62, Lys-65, Thr-66, Thr-67, 128-130 (EDF), Arg-171, Tyr-181, and Arg-218. Thr-66 is a binding site for Mg(2+). The small ATPAse domain (RuvB-S) stretch occupies residues 182 to 252 (SVEELMLIIN…NAKAALDLLE (71 aa)). Residues 255–339 (ELGLDPTDRL…NKNAGELSLW (85 aa)) are head domain (RuvB-H). DNA-binding residues include Arg-310 and Arg-315.

The protein belongs to the RuvB family. As to quaternary structure, homohexamer. Forms an RuvA(8)-RuvB(12)-Holliday junction (HJ) complex. HJ DNA is sandwiched between 2 RuvA tetramers; dsDNA enters through RuvA and exits via RuvB. An RuvB hexamer assembles on each DNA strand where it exits the tetramer. Each RuvB hexamer is contacted by two RuvA subunits (via domain III) on 2 adjacent RuvB subunits; this complex drives branch migration. In the full resolvosome a probable DNA-RuvA(4)-RuvB(12)-RuvC(2) complex forms which resolves the HJ.

It is found in the cytoplasm. The enzyme catalyses ATP + H2O = ADP + phosphate + H(+). Functionally, the RuvA-RuvB-RuvC complex processes Holliday junction (HJ) DNA during genetic recombination and DNA repair, while the RuvA-RuvB complex plays an important role in the rescue of blocked DNA replication forks via replication fork reversal (RFR). RuvA specifically binds to HJ cruciform DNA, conferring on it an open structure. The RuvB hexamer acts as an ATP-dependent pump, pulling dsDNA into and through the RuvAB complex. RuvB forms 2 homohexamers on either side of HJ DNA bound by 1 or 2 RuvA tetramers; 4 subunits per hexamer contact DNA at a time. Coordinated motions by a converter formed by DNA-disengaged RuvB subunits stimulates ATP hydrolysis and nucleotide exchange. Immobilization of the converter enables RuvB to convert the ATP-contained energy into a lever motion, pulling 2 nucleotides of DNA out of the RuvA tetramer per ATP hydrolyzed, thus driving DNA branch migration. The RuvB motors rotate together with the DNA substrate, which together with the progressing nucleotide cycle form the mechanistic basis for DNA recombination by continuous HJ branch migration. Branch migration allows RuvC to scan DNA until it finds its consensus sequence, where it cleaves and resolves cruciform DNA. This chain is Holliday junction branch migration complex subunit RuvB, found in Carboxydothermus hydrogenoformans (strain ATCC BAA-161 / DSM 6008 / Z-2901).